The primary structure comprises 711 residues: Putative membrane protein IgaA homolog (711 aa).

Residue methionine 1 is a topological domain, periplasmic. The chain crosses the membrane as a helical span at residues 2 to 22 (STIVIFLAALLACSLLAGWLI). Residues 23 to 204 (KVRSRRRQLP…YALSRPRGLR (182 aa)) are Cytoplasmic-facing. 2 helical membrane passes run 205–225 (EALL…TPDV) and 226–246 (FVPW…WGLF). Residues 247 to 339 (APPAKSSLRE…KNFPLQHWLR (93 aa)) lie on the Cytoplasmic side of the membrane. A helical membrane pass occupies residues 340–360 (STIIAAGSLLVLFMLLFWIPL). The Periplasmic portion of the chain corresponds to 361–655 (DMPLKFTLSW…IPDRSGLWRY (295 aa)). A helical membrane pass occupies residues 656–676 (LSTTLLLLTMLGSAIYNGVQA). Topologically, residues 677-711 (WRRYQRHRTRMMKIQAYYESCLNPQLITPSESLIE) are cytoplasmic.

The protein belongs to the IgaA family.

The protein localises to the cell inner membrane. This Escherichia coli O157:H7 protein is Putative membrane protein IgaA homolog (yrfF).